Consider the following 258-residue polypeptide: Acyl-[acyl-carrier-protein]--UDP-N-acetylglucosamine O-acyltransferase (258 aa).

Belongs to the transferase hexapeptide repeat family. LpxA subfamily. As to quaternary structure, homotrimer.

It localises to the cytoplasm. It carries out the reaction a (3R)-hydroxyacyl-[ACP] + UDP-N-acetyl-alpha-D-glucosamine = a UDP-3-O-[(3R)-3-hydroxyacyl]-N-acetyl-alpha-D-glucosamine + holo-[ACP]. It functions in the pathway glycolipid biosynthesis; lipid IV(A) biosynthesis; lipid IV(A) from (3R)-3-hydroxytetradecanoyl-[acyl-carrier-protein] and UDP-N-acetyl-alpha-D-glucosamine: step 1/6. Its function is as follows. Involved in the biosynthesis of lipid A, a phosphorylated glycolipid that anchors the lipopolysaccharide to the outer membrane of the cell. The polypeptide is Acyl-[acyl-carrier-protein]--UDP-N-acetylglucosamine O-acyltransferase (Halorhodospira halophila (strain DSM 244 / SL1) (Ectothiorhodospira halophila (strain DSM 244 / SL1))).